A 479-amino-acid polypeptide reads, in one-letter code: MGKLLVLMLVGMFLAFESLEALEYGDALNKSILFFEGQRSGKLPTNQRVKWRADSALSDGSLANVNLIGGYYDAGDNVKFVWPMSFTTTLLSWAAIEYQNEISSVNQLGYLRSTIKWGTDFILRAHTSPNMLYTQVGDGNSDHSCWERPEDMDTSRTLYSISSSSPGSEAAGEAAAALAAASLVFKSVDSTYSSTLLNHAKTLFEFADKYRGSYQASCPFYCSYSGYQDELLWAAAWLYKATGDKIYINYVISNKDWSQAVNEFSWDNKFVGAQALLVSEFYNGANDLAKFKSDVESFVCAMMPGSSSQQIKPTPGGLLFIRDSSNLQYVTTATTVLFHYSKTLTKAGVGSIQCGSTKFTVSQIRNFAKSQVDYILGNNPMKMSYMVGFGTKYPTQPHHRGSSLPSIQSKPEKIDCNGGYSYYNSDTPNPNVHIGAIVGGPNSSDQYSDKKSDYSHAEPTTYINAAFIGPVAALISSSG.

Residues Met1 to Ala21 form the signal peptide. N-linked (GlcNAc...) asparagine glycosylation is present at Asn29. The active-site Nucleophile is the Asp76. Residue His398 is part of the active site. N-linked (GlcNAc...) asparagine glycosylation is present at Asn442. Residues Asp449 and Glu458 contribute to the active site.

The protein belongs to the glycosyl hydrolase 9 (cellulase E) family.

It is found in the secreted. The catalysed reaction is Endohydrolysis of (1-&gt;4)-beta-D-glucosidic linkages in cellulose, lichenin and cereal beta-D-glucans.. The sequence is that of Endoglucanase 20 from Arabidopsis thaliana (Mouse-ear cress).